The chain runs to 209 residues: Redox-sensing transcriptional repressor Rex (209 aa).

Positions L16–F55 form a DNA-binding region, H-T-H motif. An NAD(+)-binding site is contributed by G90–G95.

It belongs to the transcriptional regulatory Rex family. In terms of assembly, homodimer.

The protein localises to the cytoplasm. Functionally, modulates transcription in response to changes in cellular NADH/NAD(+) redox state. The sequence is that of Redox-sensing transcriptional repressor Rex from Bacillus cereus (strain ATCC 10987 / NRS 248).